We begin with the raw amino-acid sequence, 233 residues long: Purine nucleoside phosphorylase DeoD-type (233 aa).

Histidine 4 is an a purine D-ribonucleoside binding site. Phosphate contacts are provided by residues glycine 20, arginine 24, arginine 43, and arginine 87–threonine 90. A purine D-ribonucleoside contacts are provided by residues glutamate 179–glutamate 181 and serine 203–aspartate 204. Aspartate 204 acts as the Proton donor in catalysis.

The protein belongs to the PNP/UDP phosphorylase family. As to quaternary structure, homohexamer; trimer of homodimers.

The enzyme catalyses a purine D-ribonucleoside + phosphate = a purine nucleobase + alpha-D-ribose 1-phosphate. It catalyses the reaction a purine 2'-deoxy-D-ribonucleoside + phosphate = a purine nucleobase + 2-deoxy-alpha-D-ribose 1-phosphate. Its function is as follows. Catalyzes the reversible phosphorolytic breakdown of the N-glycosidic bond in the beta-(deoxy)ribonucleoside molecules, with the formation of the corresponding free purine bases and pentose-1-phosphate. This chain is Purine nucleoside phosphorylase DeoD-type, found in Thermoanaerobacter pseudethanolicus (strain ATCC 33223 / 39E) (Clostridium thermohydrosulfuricum).